Reading from the N-terminus, the 783-residue chain is MEPERKRSGSTLKKGRKRRLIPSKVVGAAEATRSHWDLEEKQQPIAKKARLSTVLFAENCEVTHGQLCELLKYAVLGKSSFPKPSWCQLFHQNHLKNVVVFILQGLSQLHFYKFYLEFGFLRKAFKHKFRMPPPSSDFLADIIGLQKKQIIGNLPKAMEGSLPFASSKVSINLQKDPIIQKYGFKKVGLTRCLLTKEEMKTYHFPLQGFLDCENFVPTKCNGSVTDNSPLFGLDCEMCLTSKGRELTRISLVAEGGGCVMDELVKPDNKIVDYLTSFSGITKKILNPVTTKLKDVQRRLKILLPPDAVLVGHSLDLDLRALKMIHPYVIDTSLLYVREQGRRFKLKFLAKAILGKDIQCPDRLGHDATEDARTTLELARYFLKYGPKKIAELNLEALFSYQESQEPRNTAEGVQRLNTSVLECLDSVGQKLLFLTQEADASALSSSKNCQTIKCLSNKEVLEQARVEIPLFPFSIVQFSFEPFSPNLTQEMNKRIKIKWTEMSTVYAGPFNKNCNLSALKRLFKSFGPVQLMTLVLETHQPHLCIQYEVLEAAQLAIESLDGVLVEGSCIKVQRPVTELTLDCDTLVNELEQDSENRGTIYLSGVSETFKEHLLQHCSIFLGLEAMILPKDLKSGKQKGYCFLRFKTFGSAQRALNILTGKDWKLRGRHALTPRHLHAWLRGLARESRLPGVRVIPPPSEQEAWQMLNVDHPKIAAWHWGRKIEKLYHNLCPGTLCLILLPGTKSTHGSLSGLGLMGIKDEEESTIPQTCVCESAHHLPGVIS.

An Exonuclease domain is found at 230-378 (LFGLDCEMCL…EDARTTLELA (149 aa)). 2 consecutive RRM domains span residues 503-577 (STVY…RPVT) and 598-677 (GTIY…RHLH).

In Bos taurus (Bovine), this protein is RNA exonuclease 5 (REXO5).